The chain runs to 103 residues: Ig kappa-b5 chain C region (103 aa).

Residues Pro-5–Ser-99 form the Ig-like domain. Cysteines 26 and 85 form a disulfide.

This chain is Ig kappa-b5 chain C region, found in Oryctolagus cuniculus (Rabbit).